A 68-amino-acid chain; its full sequence is Wasabi receptor toxin (68 aa).

A signal peptide spans 1 to 21 (MKYFTLALTLLFLLLINPCKD). A propeptide spanning residues 22–35 (MNFAWAESSEKVER) is cleaved from the precursor. Cystine bridges form between Cys44/Cys62 and Cys48/Cys58.

This sequence belongs to the short scorpion toxin superfamily. Potassium channel inhibitor kappa-KTx family. Kappa-KTx 1 subfamily. As to quaternary structure, monomer. Expressed by the venom gland.

Its subcellular location is the secreted. The protein localises to the host cytoplasm. In terms of biological role, cell-penetrating peptide (CPP) with defensive purpose that induces pain by specifically activating mammalian sensory neuron TRPA1 channels. It non-covalently binds to the same region than other TRPA1 agonists (irritants), but acts via a distinct biochemical mechanism. Its binding stabilizes the TRPA1 open state and diminishes calcium-permeability. Consequently, it produces pain and pain hypersensitivity, but fails to trigger efferent release of neuropeptides (CGRP) and neurogenic inflammation typically produced by noxious electrophiles. Is not active on voltage-gated potassium channels and other TRP channels. The sequence is that of Wasabi receptor toxin from Urodacus manicatus (Black rock scorpion).